The chain runs to 407 residues: Phosphopentomutase (407 aa).

Mn(2+) is bound by residues Asp10, Asp307, His312, Asp348, His349, and His360.

This sequence belongs to the phosphopentomutase family. Mn(2+) serves as cofactor.

The protein localises to the cytoplasm. It carries out the reaction 2-deoxy-alpha-D-ribose 1-phosphate = 2-deoxy-D-ribose 5-phosphate. It catalyses the reaction alpha-D-ribose 1-phosphate = D-ribose 5-phosphate. It participates in carbohydrate degradation; 2-deoxy-D-ribose 1-phosphate degradation; D-glyceraldehyde 3-phosphate and acetaldehyde from 2-deoxy-alpha-D-ribose 1-phosphate: step 1/2. Its function is as follows. Isomerase that catalyzes the conversion of deoxy-ribose 1-phosphate (dRib-1-P) and ribose 1-phosphate (Rib-1-P) to deoxy-ribose 5-phosphate (dRib-5-P) and ribose 5-phosphate (Rib-5-P), respectively. In Methylobacterium nodulans (strain LMG 21967 / CNCM I-2342 / ORS 2060), this protein is Phosphopentomutase.